Consider the following 228-residue polypeptide: Probable septum site-determining protein MinC (228 aa).

This sequence belongs to the MinC family. In terms of assembly, interacts with MinD and FtsZ.

Cell division inhibitor that blocks the formation of polar Z ring septums. Rapidly oscillates between the poles of the cell to destabilize FtsZ filaments that have formed before they mature into polar Z rings. Prevents FtsZ polymerization. This is Probable septum site-determining protein MinC from Pectobacterium atrosepticum (strain SCRI 1043 / ATCC BAA-672) (Erwinia carotovora subsp. atroseptica).